Consider the following 143-residue polypeptide: Small ribosomal subunit protein uS12 (143 aa).

Pro-62 bears the Hydroxyproline mark.

The protein belongs to the universal ribosomal protein uS12 family.

This chain is Small ribosomal subunit protein uS12 (rps23), found in Dictyostelium discoideum (Social amoeba).